The chain runs to 360 residues: UDP-N-acetylglucosamine--N-acetylmuramyl-(pentapeptide) pyrophosphoryl-undecaprenol N-acetylglucosamine transferase (360 aa).

Residues Ser198 and Gln289 each coordinate UDP-N-acetyl-alpha-D-glucosamine.

Belongs to the glycosyltransferase 28 family. MurG subfamily.

Its subcellular location is the cell membrane. The catalysed reaction is Mur2Ac(oyl-L-Ala-gamma-D-Glu-L-Lys-D-Ala-D-Ala)-di-trans,octa-cis-undecaprenyl diphosphate + UDP-N-acetyl-alpha-D-glucosamine = beta-D-GlcNAc-(1-&gt;4)-Mur2Ac(oyl-L-Ala-gamma-D-Glu-L-Lys-D-Ala-D-Ala)-di-trans,octa-cis-undecaprenyl diphosphate + UDP + H(+). Its pathway is cell wall biogenesis; peptidoglycan biosynthesis. Functionally, cell wall formation. Catalyzes the transfer of a GlcNAc subunit on undecaprenyl-pyrophosphoryl-MurNAc-pentapeptide (lipid intermediate I) to form undecaprenyl-pyrophosphoryl-MurNAc-(pentapeptide)GlcNAc (lipid intermediate II). The sequence is that of UDP-N-acetylglucosamine--N-acetylmuramyl-(pentapeptide) pyrophosphoryl-undecaprenol N-acetylglucosamine transferase from Streptococcus pyogenes serotype M4 (strain MGAS10750).